The primary structure comprises 183 residues: Large ribosomal subunit protein uL5 (183 aa).

The protein belongs to the universal ribosomal protein uL5 family. Part of the 50S ribosomal subunit; part of the 5S rRNA/L5/L18/L25 subcomplex. Contacts the 5S rRNA and the P site tRNA. Forms a bridge to the 30S subunit in the 70S ribosome.

This is one of the proteins that bind and probably mediate the attachment of the 5S RNA into the large ribosomal subunit, where it forms part of the central protuberance. In the 70S ribosome it contacts protein S13 of the 30S subunit (bridge B1b), connecting the 2 subunits; this bridge is implicated in subunit movement. Contacts the P site tRNA; the 5S rRNA and some of its associated proteins might help stabilize positioning of ribosome-bound tRNAs. This chain is Large ribosomal subunit protein uL5, found in Pseudothermotoga lettingae (strain ATCC BAA-301 / DSM 14385 / NBRC 107922 / TMO) (Thermotoga lettingae).